The following is a 151-amino-acid chain: SsrA-binding protein (151 aa).

It belongs to the SmpB family.

Its subcellular location is the cytoplasm. In terms of biological role, required for rescue of stalled ribosomes mediated by trans-translation. Binds to transfer-messenger RNA (tmRNA), required for stable association of tmRNA with ribosomes. tmRNA and SmpB together mimic tRNA shape, replacing the anticodon stem-loop with SmpB. tmRNA is encoded by the ssrA gene; the 2 termini fold to resemble tRNA(Ala) and it encodes a 'tag peptide', a short internal open reading frame. During trans-translation Ala-aminoacylated tmRNA acts like a tRNA, entering the A-site of stalled ribosomes, displacing the stalled mRNA. The ribosome then switches to translate the ORF on the tmRNA; the nascent peptide is terminated with the 'tag peptide' encoded by the tmRNA and targeted for degradation. The ribosome is freed to recommence translation, which seems to be the essential function of trans-translation. The protein is SsrA-binding protein of Campylobacter concisus (strain 13826).